The primary structure comprises 307 residues: 4-diphosphocytidyl-2-C-methyl-D-erythritol kinase (307 aa).

K14 is a catalytic residue. 107-117 contributes to the ATP binding site; it reads PVAGGMAGGSA. D149 is a catalytic residue.

It belongs to the GHMP kinase family. IspE subfamily.

It carries out the reaction 4-CDP-2-C-methyl-D-erythritol + ATP = 4-CDP-2-C-methyl-D-erythritol 2-phosphate + ADP + H(+). It functions in the pathway isoprenoid biosynthesis; isopentenyl diphosphate biosynthesis via DXP pathway; isopentenyl diphosphate from 1-deoxy-D-xylulose 5-phosphate: step 3/6. Catalyzes the phosphorylation of the position 2 hydroxy group of 4-diphosphocytidyl-2C-methyl-D-erythritol. The chain is 4-diphosphocytidyl-2-C-methyl-D-erythritol kinase from Thermobifida fusca (strain YX).